A 251-amino-acid polypeptide reads, in one-letter code: Phosphate import ATP-binding protein PstB (251 aa).

Residues 5–246 (FDIRNFSVYY…PEKELTEKYL (242 aa)) enclose the ABC transporter domain. 37-44 (GPSGCGKS) provides a ligand contact to ATP.

Belongs to the ABC transporter superfamily. Phosphate importer (TC 3.A.1.7) family. As to quaternary structure, the complex is composed of two ATP-binding proteins (PstB), two transmembrane proteins (PstC and PstA) and a solute-binding protein (PstS).

Its subcellular location is the cell membrane. The catalysed reaction is phosphate(out) + ATP + H2O = ADP + 2 phosphate(in) + H(+). In terms of biological role, part of the ABC transporter complex PstSACB involved in phosphate import. Responsible for energy coupling to the transport system. This Archaeoglobus fulgidus (strain ATCC 49558 / DSM 4304 / JCM 9628 / NBRC 100126 / VC-16) protein is Phosphate import ATP-binding protein PstB.